Here is a 155-residue protein sequence, read N- to C-terminus: Small ribosomal subunit protein uS7 (155 aa).

It belongs to the universal ribosomal protein uS7 family. In terms of assembly, part of the 30S ribosomal subunit. Contacts proteins S9 and S11.

Functionally, one of the primary rRNA binding proteins, it binds directly to 16S rRNA where it nucleates assembly of the head domain of the 30S subunit. Is located at the subunit interface close to the decoding center, probably blocks exit of the E-site tRNA. The protein is Small ribosomal subunit protein uS7 of Mycoplasmoides gallisepticum (strain R(low / passage 15 / clone 2)) (Mycoplasma gallisepticum).